Here is a 290-residue protein sequence, read N- to C-terminus: ATP synthase gamma chain (290 aa).

It belongs to the ATPase gamma chain family. As to quaternary structure, F-type ATPases have 2 components, CF(1) - the catalytic core - and CF(0) - the membrane proton channel. CF(1) has five subunits: alpha(3), beta(3), gamma(1), delta(1), epsilon(1). CF(0) has three main subunits: a, b and c.

The protein localises to the cell membrane. Produces ATP from ADP in the presence of a proton gradient across the membrane. The gamma chain is believed to be important in regulating ATPase activity and the flow of protons through the CF(0) complex. The sequence is that of ATP synthase gamma chain from Buchnera aphidicola subsp. Diuraphis noxia.